Reading from the N-terminus, the 208-residue chain is Probable GTP-binding protein EngB (208 aa).

Residues 25-199 (TGIEVAFAGR…RQKLDSWYNG (175 aa)) form the EngB-type G domain. Residues 33–40 (GRSNAGKS), 60–64 (GRTQL), 78–81 (DLPG), 145–148 (TKSD), and 178–180 (FSS) each bind GTP. Mg(2+) contacts are provided by Ser-40 and Thr-62.

Belongs to the TRAFAC class TrmE-Era-EngA-EngB-Septin-like GTPase superfamily. EngB GTPase family. The cofactor is Mg(2+).

Functionally, necessary for normal cell division and for the maintenance of normal septation. This is Probable GTP-binding protein EngB from Enterobacter sp. (strain 638).